Here is a 163-residue protein sequence, read N- to C-terminus: UPF0134 protein MPN_139 (163 aa).

The protein belongs to the UPF0134 family.

This is UPF0134 protein MPN_139 from Mycoplasma pneumoniae (strain ATCC 29342 / M129 / Subtype 1) (Mycoplasmoides pneumoniae).